Consider the following 244-residue polypeptide: Multiple organellar RNA editing factor 3, mitochondrial (244 aa).

A mitochondrion-targeting transit peptide spans M1 to K62. 2 disordered regions span residues T59–P82 and Y196–A244. Polar residues predominate over residues R60 to N80. Basic and acidic residues predominate over residues P210–P226.

This sequence belongs to the MORF family. As to quaternary structure, heterodimer with MORF1. Homodimer and heterodimers with MORF8/RIP1, MORF4/RIP4 and MORF5/RIP5.

The protein resides in the mitochondrion. Involved in organellar RNA editing. Required for the processing of RNA editing sites in mitochondria. In Arabidopsis thaliana (Mouse-ear cress), this protein is Multiple organellar RNA editing factor 3, mitochondrial.